The following is a 438-amino-acid chain: Terminase, large subunit (438 aa).

Positions 62-68 (SRRVGKS) match the Walker A motif motif. Positions 150–155 (FIIFDE) match the Walker B motif motif. The active-site For ATPase activity is Glu-155. The Mg(2+) site is built by Asp-286, Asp-342, and Asp-418.

The protein belongs to the Tequatrovirus large terminase family. In terms of assembly, interacts with the terminase small subunit; the active complex is probably heterooligomeric. Interacts with the portal protein. It depends on Mg(2+) as a cofactor.

The terminase large subunit acts as an ATP driven molecular motor necessary for viral DNA translocation into empty capsids and as an endonuclease that cuts the viral genome to initiate and to end a packaging reaction The terminase lies at a unique vertex of the procapsid and is composed of two subunits, a small terminase subunit involved in viral DNA recognition (packaging sequence), and a large terminase subunit possessing endonucleolytic and ATPase activities. Both terminase subunits heterooligomerize and are docked on the portal protein to form the packaging machine. The terminase large subunit exhibits endonuclease activity and cleaves the viral genome concatemer. Direct long terminal repeats at each end of the genome are duplicated in concert with packaging. Once the capsid is packaged with the DNA, the terminase complex is substituted by the tail. In Escherichia phage T5 (Enterobacteria phage T5), this protein is Terminase, large subunit.